Here is a 97-residue protein sequence, read N- to C-terminus: Type 1 phosphatases regulator YPI2 (97 aa).

The segment at 1-97 is disordered; the sequence is MNKKKTKICC…KMMEKKSNNT (97 aa). Over residues 43–53 the composition is skewed to basic and acidic residues; sequence ENDKDLGFDER. Residues 54-65 are compositionally biased toward basic residues; the sequence is RKRRVERRRRKL.

This sequence belongs to the YPI1 family.

It is found in the nucleus. Its function is as follows. Regulator of type 1 phosphatases which maintains protein phosphatase activity under strict control. The polypeptide is Type 1 phosphatases regulator YPI2 (YPI2) (Vanderwaltozyma polyspora (strain ATCC 22028 / DSM 70294 / BCRC 21397 / CBS 2163 / NBRC 10782 / NRRL Y-8283 / UCD 57-17) (Kluyveromyces polysporus)).